The chain runs to 132 residues: UPF0719 inner membrane protein YjfL (132 aa).

The Periplasmic portion of the chain corresponds to 1-6 (MHILDS). Residues 7-27 (LLAFSAYFFIGVAMVIIFLFI) form a helical membrane-spanning segment. The Cytoplasmic segment spans residues 28-46 (YSKITPHNEWQLIKNNNTA). Residues 47 to 67 (ASLAFSGTLLGYVIPLSSAAI) traverse the membrane as a helical segment. Residues 68–71 (NAVS) are Periplasmic-facing. Residues 72 to 92 (IPDYFAWGGIALVIQLLVFAG) form a helical membrane-spanning segment. Residues 93 to 109 (VRLYMPALSEKIINHNT) are Cytoplasmic-facing. Residues 110–130 (AAGMFMGTAALAGGIFNAACM) traverse the membrane as a helical segment. Residues 131–132 (TW) lie on the Periplasmic side of the membrane.

This sequence belongs to the UPF0719 family.

The protein localises to the cell inner membrane. The polypeptide is UPF0719 inner membrane protein YjfL (yjfL) (Escherichia coli O157:H7).